A 68-amino-acid chain; its full sequence is Large ribosomal subunit protein uL29 (68 aa).

The protein belongs to the universal ribosomal protein uL29 family.

This is Large ribosomal subunit protein uL29 from Chlorobaculum tepidum (strain ATCC 49652 / DSM 12025 / NBRC 103806 / TLS) (Chlorobium tepidum).